The following is a 225-amino-acid chain: MLWIFTEKMGKITAIAKGAKKSKSKLFSLTHPLCYGDYLLFKGKGLYRLSEGKIRTSFQTSLTDLEKLTYASYLCELIDISLQDEEENFNLYKEFITCLYLINTEAISYELLIRAFELKLLKYTGYGLRFDNCVFCKNKLSVSNYISLRYFGGVCDKCPKEHGLYINKATYNALRFLNNTSLDKVYRLTLTEEVKAELFKVTSFIISSVYSRKPKSLEMLKFIKE.

Belongs to the RecO family.

In terms of biological role, involved in DNA repair and RecF pathway recombination. The protein is DNA repair protein RecO of Clostridium perfringens (strain ATCC 13124 / DSM 756 / JCM 1290 / NCIMB 6125 / NCTC 8237 / Type A).